We begin with the raw amino-acid sequence, 181 residues long: MRVVLLGPPGAGKGTQAQRLAEKLGIPQISTGELFRRNIEKDTKLGHEAKKYLDAGDLVPADLTNQLVDDRLNKSDTVDGFILDGYPRSLEQAKALHEMLERRGTDIDAVLEFRVSQAVVLERLKGRGRADDTDDVVINRMNIYRDETASLLEYYSSELKTIDAIGTMDEVFARALHALGK.

An ATP-binding site is contributed by G10–T15. The segment at S30–V59 is NMP. AMP contacts are provided by residues T31, R36, D57–V59, G85–R88, and Q92. The interval G126–D132 is LID. Position 127 (R127) interacts with ATP. Positions 129 and 140 each coordinate AMP. G166 is an ATP binding site.

The protein belongs to the adenylate kinase family. In terms of assembly, monomer.

It is found in the cytoplasm. The enzyme catalyses AMP + ATP = 2 ADP. Its pathway is purine metabolism; AMP biosynthesis via salvage pathway; AMP from ADP: step 1/1. Functionally, catalyzes the reversible transfer of the terminal phosphate group between ATP and AMP. Plays an important role in cellular energy homeostasis and in adenine nucleotide metabolism. The chain is Adenylate kinase from Mycobacterium leprae (strain Br4923).